The following is a 354-amino-acid chain: MKKNGRDNNFYHLYKNKYLITGVTILSFILMFQYKYHEVLTLHDNSENAVQSSKLFWARLLFGRTRSRITGQILKMEIPNTYRLFIFNFLIKYMHINKEEIKYPIESYKSIGDFFSRYIREETRPIGDVSDYSIVSPCDSELIDYGELTSEYLENIKGVKFNVNTFLGSKFQKKHNDGSTKFFYAIFYLSPKKYHHFHAPFNFKYKIRRHISGELFPVFQGMFKFINNLFNINERVILSGEWKGGNVYYAAISAYNVGNIKIINDEELVTNNLRHQLSYMGGDINTKIFDSYKSVEVGDEIGEFRMGSSIVVIFENKKDFSWNVNQNQTVSVGQRLGGIGEPVKEENRFIKIRS.

A helical membrane pass occupies residues 18 to 36; that stretch reads YLITGVTILSFILMFQYKY. Catalysis depends on charge relay system; for autoendoproteolytic cleavage activity residues Asp-139, His-198, and Ser-308. Residue Ser-308 is the Schiff-base intermediate with substrate; via pyruvic acid; for decarboxylase activity of the active site. At Ser-308 the chain carries Pyruvic acid (Ser); by autocatalysis.

The protein belongs to the phosphatidylserine decarboxylase family. PSD-B subfamily. Eukaryotic type I sub-subfamily. As to quaternary structure, heterodimer of a large membrane-associated beta subunit and a small pyruvoyl-containing alpha subunit. The cofactor is pyruvate. Post-translationally, is synthesized initially as an inactive proenzyme. Formation of the active enzyme involves a self-maturation process in which the active site pyruvoyl group is generated from an internal serine residue via an autocatalytic post-translational modification. Two non-identical subunits are generated from the proenzyme in this reaction, and the pyruvate is formed at the N-terminus of the alpha chain, which is derived from the carboxyl end of the proenzyme. The autoendoproteolytic cleavage occurs by a canonical serine protease mechanism, in which the side chain hydroxyl group of the serine supplies its oxygen atom to form the C-terminus of the beta chain, while the remainder of the serine residue undergoes an oxidative deamination to produce ammonia and the pyruvoyl prosthetic group on the alpha chain. During this reaction, the Ser that is part of the protease active site of the proenzyme becomes the pyruvoyl prosthetic group, which constitutes an essential element of the active site of the mature decarboxylase.

It is found in the membrane. The protein localises to the endoplasmic reticulum membrane. It carries out the reaction a 1,2-diacyl-sn-glycero-3-phospho-L-serine + H(+) = a 1,2-diacyl-sn-glycero-3-phosphoethanolamine + CO2. Its pathway is phospholipid metabolism; phosphatidylethanolamine biosynthesis; phosphatidylethanolamine from CDP-diacylglycerol: step 2/2. With respect to regulation, protease activity is inhibited by PMSF. In terms of biological role, catalyzes the formation of phosphatidylethanolamine (PtdEtn) from phosphatidylserine (PtdSer). Plays a central role in phospholipid metabolism and in the interorganelle trafficking of phosphatidylserine. The sequence is that of Phosphatidylserine decarboxylase proenzyme from Plasmodium knowlesi (strain H).